The sequence spans 199 residues: 3-isopropylmalate dehydratase small subunit (199 aa).

This sequence belongs to the LeuD family. LeuD type 1 subfamily. In terms of assembly, heterodimer of LeuC and LeuD.

The catalysed reaction is (2R,3S)-3-isopropylmalate = (2S)-2-isopropylmalate. Its pathway is amino-acid biosynthesis; L-leucine biosynthesis; L-leucine from 3-methyl-2-oxobutanoate: step 2/4. Catalyzes the isomerization between 2-isopropylmalate and 3-isopropylmalate, via the formation of 2-isopropylmaleate. This Bacillus licheniformis (strain ATCC 14580 / DSM 13 / JCM 2505 / CCUG 7422 / NBRC 12200 / NCIMB 9375 / NCTC 10341 / NRRL NRS-1264 / Gibson 46) protein is 3-isopropylmalate dehydratase small subunit.